The following is a 61-amino-acid chain: Conotoxin Bt5.1 (61 aa).

A signal peptide spans 1-22; that stretch reads MRGLPVFVILLLLIASEPSVDA. Residues 23 to 48 constitute a propeptide that is removed on maturation; it reads RPKTKADVPLTSLNDNAKRTLQILRN.

Belongs to the conotoxin T superfamily. Contains 2 disulfide bonds that can be either 'C1-C3, C2-C4' or 'C1-C4, C2-C3', since these disulfide connectivities have been observed for conotoxins with cysteine framework V (for examples, see AC P0DQQ7 and AC P81755). Expressed by the venom duct.

The protein resides in the secreted. The sequence is that of Conotoxin Bt5.1 from Conus betulinus (Beech cone).